Reading from the N-terminus, the 84-residue chain is Small ribosomal subunit protein bS18A (84 aa).

Belongs to the bacterial ribosomal protein bS18 family. Part of the 30S ribosomal subunit. Forms a tight heterodimer with protein bS6.

In terms of biological role, binds as a heterodimer with protein bS6 to the central domain of the 16S rRNA, where it helps stabilize the platform of the 30S subunit. The polypeptide is Small ribosomal subunit protein bS18A (Mycolicibacterium paratuberculosis (strain ATCC BAA-968 / K-10) (Mycobacterium paratuberculosis)).